We begin with the raw amino-acid sequence, 156 residues long: Small ribosomal subunit protein uS7 (156 aa).

Belongs to the universal ribosomal protein uS7 family. In terms of assembly, part of the 30S ribosomal subunit. Contacts proteins S9 and S11.

In terms of biological role, one of the primary rRNA binding proteins, it binds directly to 16S rRNA where it nucleates assembly of the head domain of the 30S subunit. Is located at the subunit interface close to the decoding center, probably blocks exit of the E-site tRNA. The polypeptide is Small ribosomal subunit protein uS7 (Vibrio vulnificus (strain CMCP6)).